The following is a 397-amino-acid chain: F-box protein At3g28330 (397 aa).

The 51-residue stretch at 6–56 (KKDMDFLTEDLWEIILARLPLKSIITTPKLVCKVWKSIIESRCFRDLFQSL) folds into the F-box domain.

This is F-box protein At3g28330 from Arabidopsis thaliana (Mouse-ear cress).